Reading from the N-terminus, the 49-residue chain is uncharacterized protein (49 aa).

The chain crosses the membrane as a helical span at residues 20–42 (LFLVGLTIGKMATSRILSFLGFI).

It is found in the membrane. This is an uncharacterized protein from Dictyostelium discoideum (Social amoeba).